A 362-amino-acid polypeptide reads, in one-letter code: 3-isopropylmalate dehydrogenase (362 aa).

Position 78–91 (Gly78–Glu91) interacts with NAD(+). Substrate contacts are provided by Arg99, Arg109, Arg138, and Asp227. Mg(2+)-binding residues include Asp227, Asp251, and Asp255. Gly285 to Asn297 contacts NAD(+).

It belongs to the isocitrate and isopropylmalate dehydrogenases family. LeuB type 1 subfamily. Homodimer. Mg(2+) serves as cofactor. Requires Mn(2+) as cofactor.

The protein resides in the cytoplasm. It carries out the reaction (2R,3S)-3-isopropylmalate + NAD(+) = 4-methyl-2-oxopentanoate + CO2 + NADH. It functions in the pathway amino-acid biosynthesis; L-leucine biosynthesis; L-leucine from 3-methyl-2-oxobutanoate: step 3/4. In terms of biological role, catalyzes the oxidation of 3-carboxy-2-hydroxy-4-methylpentanoate (3-isopropylmalate) to 3-carboxy-4-methyl-2-oxopentanoate. The product decarboxylates to 4-methyl-2 oxopentanoate. The polypeptide is 3-isopropylmalate dehydrogenase (Photobacterium profundum (strain SS9)).